A 429-amino-acid polypeptide reads, in one-letter code: Cytochrome P450 BJ-3 (429 aa).

Cys376 serves as a coordination point for heme.

Belongs to the cytochrome P450 family. Heme serves as cofactor.

Cytochromes P450 are a group of heme-thiolate monooxygenases. They oxidize a variety of structurally unrelated compounds, including steroids, fatty acids, and xenobiotics. The polypeptide is Cytochrome P450 BJ-3 (cyp114) (Bradyrhizobium diazoefficiens (strain JCM 10833 / BCRC 13528 / IAM 13628 / NBRC 14792 / USDA 110)).